Here is a 431-residue protein sequence, read N- to C-terminus: IMP-specific 5'-nucleotidase 1 (431 aa).

Lysine 117 provides a ligand contact to ATP. Aspartate 157 functions as the Nucleophile in the catalytic mechanism. IMP is bound by residues aspartate 157, aspartate 159, aspartate 165, threonine 193, aspartate 349, and lysine 357. Mg(2+) contacts are provided by aspartate 157 and aspartate 159. The active-site Proton donor is the aspartate 159. Residue aspartate 388 participates in Mg(2+) binding.

This sequence belongs to the ISN1 family. As to quaternary structure, homotetramer. Mg(2+) is required as a cofactor.

It catalyses the reaction IMP + H2O = inosine + phosphate. Its activity is regulated as follows. Allosterically activated by ATP. ATP binding is a prerequisite to magnesium and substrate binding. ATP binds to 2 of the subunits in the homotetramer inducing a closure of these 2 subunits and the release of the C-terminal loop, thereby activating the enzyme. In terms of biological role, IMP-specific 5'-nucleotidase involved in IMP (inositol monophosphate) degradation. This chain is IMP-specific 5'-nucleotidase 1 (isn-1), found in Neurospora crassa (strain ATCC 24698 / 74-OR23-1A / CBS 708.71 / DSM 1257 / FGSC 987).